Consider the following 106-residue polypeptide: Malonate decarboxylase acyl carrier protein (106 aa).

Serine 28 is subject to O-(phosphoribosyl dephospho-coenzyme A)serine.

Belongs to the MdcC family. Post-translationally, covalently binds the prosthetic group of malonate decarboxylase.

The protein resides in the cytoplasm. Its function is as follows. Subunit of malonate decarboxylase, it is an acyl carrier protein to which acetyl and malonyl thioester residues are bound via a 2'-(5''-phosphoribosyl)-3'-dephospho-CoA prosthetic group and turn over during the catalytic mechanism. This is Malonate decarboxylase acyl carrier protein from Stenotrophomonas maltophilia (strain K279a).